The chain runs to 172 residues: Putative phosphoesterase Bcer98_0945 (172 aa).

Residue His34 is the Proton donor of the active site. 2 short sequence motifs (HXTX) span residues 34–37 and 115–118; these read HITL and HLTI. His115 acts as the Proton acceptor in catalysis.

It belongs to the 2H phosphoesterase superfamily. YjcG family.

The polypeptide is Putative phosphoesterase Bcer98_0945 (Bacillus cytotoxicus (strain DSM 22905 / CIP 110041 / 391-98 / NVH 391-98)).